Here is a 970-residue protein sequence, read N- to C-terminus: MTTADSNSSATRGSHEMADGSNRVPNDEPYHRKSPESCENANFFVRAMRASFGYRKTSLTILVFLSVIATVLLSYYDSSLEFSVSLPTDKSESKILDHSWDVLQEIARDEHTYASEANDRVHDYLEDIIGFLVDKKSYMEYDNDLNNTHSFLRQTAPSTVTYYESNNLIVRINGSDPELPALLLSAHYDSVPSSFGVTDDGMGIASLIGILNYFSAKQTSQPARTIIINFNNNEEFGLYGALAFLSHPWFKQIKYFLNLEGTGAGGKAILFRGTDYGFAKYFKNVRFPYASSLFQQAFSARLVHSETDYKYYAELGHLRGLDLAFFRPRDMYHTAKDNIANVNKKSLWHMLSSTIDFTNGVVGGEIDLDVEAKQKEAAAFTSIFNYFFVVPMTFVFGVNVLLMVLVPLVSLISLALIFAHRKWSVSLVTFFKFPLSFILSIFLLDNFSSWFVVSVNNFLPNSSAGIIALTYFSFFVLANYLLLNGINLLFWKFKGTRHDEKLVVILQISFMFWVSLIWSTANIAKSQFNGEHSGEFLLTLLYILQAAGGVFGLLCWLFKRSRTVHTNNQELEPLLEHAVEEGYGAHVEQEGHISSSASSAISVNVIESPPPTKHYSYDWSIQFLFIVPISSFLSYNYGWLILEGLKKTLQESATSEYLVFRALKLLAVVVAVPYLPFIFKVNRIVFLVTIFLFVYGLGAIVISEPFTEANPLKLRFLQTIDLDNSPKSNLVSASGRANSSIAEILRDLPSVKESETEVVCNAKADGMTICNYEGLNPHLAPGTKNAQDLLSVKVLSNSSSSINYPFGMLSGKFEIRAEKNRECRLSFREDTGGKRSSGVVKTVVVYKNDLKNSNKVNAMKAPEGFSQDDYGNFVYKNMTGISDLKLNKLDWNRPYRIGVEWVASLDDSDTQPTLKVSVDCYWAEIGQIAEKGKIVDRIPAYTELLHYSPNYVTWANLDQGLVNVKKSVLV.

The segment covering 1–12 (MTTADSNSSATR) has biased composition (polar residues). The segment at 1-35 (MTTADSNSSATRGSHEMADGSNRVPNDEPYHRKSP) is disordered. The Cytoplasmic portion of the chain corresponds to 1–56 (MTTADSNSSATRGSHEMADGSNRVPNDEPYHRKSPESCENANFFVRAMRASFGYRK). The span at 25–35 (PNDEPYHRKSP) shows a compositional bias: basic and acidic residues. Residues 57-77 (TSLTILVFLSVIATVLLSYYD) traverse the membrane as a helical segment. Topologically, residues 78–397 (SSLEFSVSLP…FVVPMTFVFG (320 aa)) are vacuolar. Asn146 and Asn173 each carry an N-linked (GlcNAc...) asparagine glycan. The Zn(2+) site is built by His187 and Asp199. Glu234 acts as the Proton acceptor in catalysis. Zn(2+)-binding residues include Glu235, Glu260, and His333. The helical transmembrane segment at 398–418 (VNVLLMVLVPLVSLISLALIF) threads the bilayer. The Cytoplasmic segment spans residues 419–423 (AHRKW). A helical transmembrane segment spans residues 424 to 444 (SVSLVTFFKFPLSFILSIFLL). Over 445 to 465 (DNFSSWFVVSVNNFLPNSSAG) the chain is Vacuolar. Residues Asn446 and Asn461 are each glycosylated (N-linked (GlcNAc...) asparagine). The helical transmembrane segment at 466–486 (IIALTYFSFFVLANYLLLNGI) threads the bilayer. The Cytoplasmic segment spans residues 487–502 (NLLFWKFKGTRHDEKL). Residues 503-523 (VVILQISFMFWVSLIWSTANI) traverse the membrane as a helical segment. At 524–535 (AKSQFNGEHSGE) the chain is on the vacuolar side. The chain crosses the membrane as a helical span at residues 536-556 (FLLTLLYILQAAGGVFGLLCW). Residues 557–620 (LFKRSRTVHT…PTKHYSYDWS (64 aa)) lie on the Cytoplasmic side of the membrane. A helical membrane pass occupies residues 621-641 (IQFLFIVPISSFLSYNYGWLI). Topologically, residues 642 to 658 (LEGLKKTLQESATSEYL) are vacuolar. Residues 659-679 (VFRALKLLAVVVAVPYLPFIF) form a helical membrane-spanning segment. Residues 680-683 (KVNR) lie on the Cytoplasmic side of the membrane. Residues 684–704 (IVFLVTIFLFVYGLGAIVISE) form a helical membrane-spanning segment. Residues 705-970 (PFTEANPLKL…LVNVKKSVLV (266 aa)) lie on the Vacuolar side of the membrane. 3 N-linked (GlcNAc...) asparagine glycosylation sites follow: Asn738, Asn797, and Asn877.

Belongs to the peptidase M28 family. It depends on Zn(2+) as a cofactor.

It localises to the vacuole membrane. Functionally, may be involved in vacuolar sorting and osmoregulation. The polypeptide is Vacuolar membrane protease (Meyerozyma guilliermondii (strain ATCC 6260 / CBS 566 / DSM 6381 / JCM 1539 / NBRC 10279 / NRRL Y-324) (Yeast)).